The sequence spans 531 residues: Probable cytochrome P450 4e1 (531 aa).

Glu307 and Cys444 together coordinate heme.

The protein belongs to the cytochrome P450 family. Requires heme as cofactor.

Its subcellular location is the endoplasmic reticulum membrane. The protein resides in the microsome membrane. In terms of biological role, may be involved in the metabolism of insect hormones and in the breakdown of synthetic insecticides. This is Probable cytochrome P450 4e1 (Cyp4e1) from Drosophila melanogaster (Fruit fly).